A 395-amino-acid chain; its full sequence is Yellow-related salivary protein M35 (395 aa).

The N-terminal stretch at 1 to 18 (MKLILTVLAFLSLQVALS) is a signal peptide.

It belongs to the major royal jelly protein family. In terms of tissue distribution, salivary gland (at protein level).

The protein resides in the secreted. Its function is as follows. Probably modulates blood feeding of sand flies on vertebrate species by binding and sequestering different mediators involved in the host response. Functions as a chemoattractant for host neutrophils; likely acts through a G-protein-coupled receptor and effect is dependent on calcium influx and phosphatidylinositol 3-kinases (PI3K) activity. In terms of biological role, (Microbial infection) Probably enhances infection caused by Leishmania species in the host through augmentation of host neutrophil recruitment into the skin. This chain is Yellow-related salivary protein M35, found in Phlebotomus duboscqi (Sandfly).